Reading from the N-terminus, the 465-residue chain is ATP synthase subunit beta (465 aa).

Residue 148-155 (GGAGVGKT) participates in ATP binding.

Belongs to the ATPase alpha/beta chains family. In terms of assembly, F-type ATPases have 2 components, CF(1) - the catalytic core - and CF(0) - the membrane proton channel. CF(1) has five subunits: alpha(3), beta(3), gamma(1), delta(1), epsilon(1). CF(0) has three main subunits: a(1), b(2) and c(9-12). The alpha and beta chains form an alternating ring which encloses part of the gamma chain. CF(1) is attached to CF(0) by a central stalk formed by the gamma and epsilon chains, while a peripheral stalk is formed by the delta and b chains.

The protein resides in the cell inner membrane. The catalysed reaction is ATP + H2O + 4 H(+)(in) = ADP + phosphate + 5 H(+)(out). Its function is as follows. Produces ATP from ADP in the presence of a proton gradient across the membrane. The catalytic sites are hosted primarily by the beta subunits. This chain is ATP synthase subunit beta, found in Neisseria meningitidis serogroup B (strain ATCC BAA-335 / MC58).